The following is a 646-amino-acid chain: Alkyl/aryl-sulfatase BDS1 (646 aa).

The residue at position 1 (Met-1) is an N-acetylmethionine. Residues His-162, His-164, Asp-166, His-167, Glu-273, Glu-292, and His-337 each contribute to the Zn(2+) site.

It belongs to the metallo-beta-lactamase superfamily. Type III sulfatase family. The cofactor is Zn(2+).

In terms of biological role, alkyl/aryl-sulfatase. Enables the use of SDS and 4-nitrocatechol as sulfur source. The polypeptide is Alkyl/aryl-sulfatase BDS1 (BDS1) (Saccharomyces cerevisiae (strain ATCC 204508 / S288c) (Baker's yeast)).